The following is a 207-amino-acid chain: M-zodatoxin-Lt4a (207 aa).

The first 22 residues, 1-22, serve as a signal peptide directing secretion; the sequence is MKFSIIALALAVAFVCVAESRS. Residues 23 to 43 constitute a propeptide that is removed on maturation; that stretch reads EEEGYDVSEEIQAEELEEAER. Positions 40–43 match the Processing quadruplet motif 1 motif; it reads EAER. At Q61 the chain carries Glutamine amide. The Inverted processing quadruplet motif 1 motif lies at 63–66; the sequence is REDS. The propeptide occupies 63–71; the sequence is REDSEEAGR. Residues 68–71 carry the Processing quadruplet motif 2 motif; the sequence is EAGR. Q89 carries the post-translational modification Glutamine amide. The short motif at 91–94 is the Inverted processing quadruplet motif 2 element; that stretch reads REDS. Positions 91–99 are excised as a propeptide; the sequence is REDSEEAGR. Positions 96 to 99 match the Processing quadruplet motif 3 motif; sequence EAGR. Q117 carries the post-translational modification Glutamine amide. The short motif at 119 to 122 is the Inverted processing quadruplet motif 3 element; that stretch reads REDS. Residues 119-127 constitute a propeptide that is removed on maturation; that stretch reads REDSEEAGR. Residues 124–127 carry the Processing quadruplet motif 4 motif; the sequence is EAGR. Q145 bears the Glutamine amide mark. Positions 147–150 match the Inverted processing quadruplet motif 4 motif; that stretch reads REDS. Positions 147–155 are excised as a propeptide; the sequence is REDSEEAGR. The Processing quadruplet motif 5 motif lies at 152 to 155; it reads EAGR. Q173 bears the Glutamine amide mark. Positions 175-178 match the Inverted processing quadruplet motif 5 motif; the sequence is REDT. Positions 175-182 are excised as a propeptide; the sequence is REDTEEAR. The Processing quadruplet motif 6 signature appears at 179 to 182; the sequence is EEAR. F206 is subject to Phenylalanine amide.

Belongs to the cationic peptide 03 (latarcin) family. 04 subfamily. Post-translationally, cleavage of the propeptide depends on the processing quadruplet motif (PQM) (XXXR, with at least one of X being E) and the inverted PQM (RXXX, with at least one of X being E). Expressed by the venom gland.

Its subcellular location is the secreted. M-zodatoxin-Lt4a: Has antimicrobial activity against Gram-positive bacteria (A.globiformis VKM Ac-1112 (MIC=0.3 uM), and B.subtilis VKM B-501 (MIC=1.1 uM)), Gram-negative bacteria (E.coli DH5-alpha (MIC=4.5 uM), E.coli MH1 (MIC=3.2 uM), and P.aeruginosa PAO1 (MIC&gt;35 uM)), and yeasts (P.pastoris GS115 (MIC=36 uM), and S.cerevisiae Y190 (MIC=18 uM)). Does not have hemolytic activity against rabbit erythrocytes. Causes paralysis, but is not lethal when injected into insect (M.domestica) larvae. In terms of biological role, shows no antimicrobial activity against Gram-positive bacterium B.subtilis B-501 or Gram-negative bacterium E.coli DH5-alpha at concentrations up to 20 uM. Functionally, shows no antimicrobial activity against Gram-positive bacterium B.subtilis B-501 or Gram-negative bacterium E.coli DH5-alpha at concentrations up to 20 uM. Shows no toxicity towards insect (S.carnaria) larvae. This is M-zodatoxin-Lt4a from Lachesana tarabaevi (Spider).